A 282-amino-acid polypeptide reads, in one-letter code: Chorismate dehydratase (282 aa).

Belongs to the MqnA/MqnD family. MqnA subfamily.

It carries out the reaction chorismate = 3-[(1-carboxyvinyl)-oxy]benzoate + H2O. Its pathway is quinol/quinone metabolism; menaquinone biosynthesis. Catalyzes the dehydration of chorismate into 3-[(1-carboxyvinyl)oxy]benzoate, a step in the biosynthesis of menaquinone (MK, vitamin K2). The chain is Chorismate dehydratase from Streptomyces coelicolor (strain ATCC BAA-471 / A3(2) / M145).